The chain runs to 946 residues: Nitrogen permease regulator 3 (946 aa).

A signal peptide spans 1–21; the sequence is MNEFLPDSCLLGVMLAVSSHS. Disordered regions lie at residues 48-171, 283-334, and 813-849; these read LGTT…KDNG, SGNW…PESS, and RRRQ…TLEG. Over residues 79 to 88 the composition is skewed to basic and acidic residues; that stretch reads SDLHSSKMER. Positions 91–125 are enriched in low complexity; it reads SSSSSSSLSSPSSGLSDSELSTDYADWSTSGSSSD. The span at 146 to 163 shows a compositional bias: polar residues; sequence ARSTRNVSPVSMSRNTSL. Basic residues predominate over residues 287–301; sequence RKSRKRNNSLSKSKR. Positions 324-333 are enriched in polar residues; sequence SAETPNSPES. Over residues 836–849 the composition is skewed to basic and acidic residues; it reads KSTKVDINDNTLEG.

Belongs to the NPR3 family.

Functionally, mediates inactivation of the TORC1 complex in response to amino acid starvation. Required for meiotic nuclear division. In Candida glabrata (strain ATCC 2001 / BCRC 20586 / JCM 3761 / NBRC 0622 / NRRL Y-65 / CBS 138) (Yeast), this protein is Nitrogen permease regulator 3 (NPR3).